A 319-amino-acid chain; its full sequence is N-acyl-aromatic-L-amino acid amidohydrolase (carboxylate-forming) (319 aa).

A hydrolytic domain region spans residues 1–210; that stretch reads MCSLPGSRKP…SILDFIELFN (210 aa). Residues H21 and E24 each coordinate Zn(2+). Residues R63 and 70 to 71 each bind substrate; that span reads NR. H116 contacts Zn(2+). Substrate-binding residues include E178 and Y288. Residues 211–318 form a shielding domain region; the sequence is QGMEFPAFEM…PGLTPSSTQT (108 aa). T318 carries the phosphothreonine modification.

Belongs to the AspA/AstE family. Aspartoacylase subfamily. In terms of assembly, exists as a mixture of homodimers and homotetramer, both catalytically active. It depends on Zn(2+) as a cofactor.

The protein localises to the apical cell membrane. Its subcellular location is the cytoplasm. It carries out the reaction an N-acyl-aromatic L-alpha-amino acid + H2O = an aromatic L-alpha-amino acid + a carboxylate. The catalysed reaction is an N-acetyl-L-cysteine-S-conjugate + H2O = an S-substituted L-cysteine + acetate. Plays an important role in deacetylating mercapturic acids in kidney proximal tubules. Also acts on N-acetyl-aromatic amino acids. The sequence is that of N-acyl-aromatic-L-amino acid amidohydrolase (carboxylate-forming) (Acy3) from Rattus norvegicus (Rat).